Reading from the N-terminus, the 297-residue chain is GTP-binding protein REM 1 (297 aa).

A compositionally biased stretch (polar residues) spans 1–10 (MTLNTQQEAK). The disordered stretch occupies residues 1–73 (MTLNTQQEAK…DGWSSESSDS (73 aa)). The residue at position 51 (S51) is a Phosphoserine. The span at 64-73 (DGWSSESSDS) shows a compositional bias: low complexity. Residues 87–94 (GDPGVGKT) and 194–197 (NKAD) each bind GTP. Positions 267-286 (ARRFLARLTARSARRRALKA) are calmodulin-binding.

It belongs to the small GTPase superfamily. RGK family. In vitro, interacts with calmodulin in a calcium-dependent manner. Interacts 14-3-3 family members including YWHAE, YWHAH, YWHAQ, YWHAZ in a phosphorylation-dependent manner. High expression in cardiac muscle. Moderate expression in lung, skeletal muscle and kidney. Low levels in spleen and brain.

Promotes endothelial cell sprouting and actin cytoskeletal reorganization. May be involved in angiogenesis. May function in Ca(2+) signaling. This chain is GTP-binding protein REM 1 (Rem1), found in Mus musculus (Mouse).